A 182-amino-acid chain; its full sequence is UPF0316 protein BCAH820_3389 (182 aa).

Transmembrane regions (helical) follow at residues 6 to 26 (LIFV…ILLV), 32 to 52 (SAAA…GIVF), and 58 to 78 (WMNI…GGYI).

Belongs to the UPF0316 family.

The protein localises to the cell membrane. In Bacillus cereus (strain AH820), this protein is UPF0316 protein BCAH820_3389.